Consider the following 96-residue polypeptide: Co-chaperonin GroES (96 aa).

Belongs to the GroES chaperonin family. As to quaternary structure, heptamer of 7 subunits arranged in a ring. Interacts with the chaperonin GroEL.

The protein localises to the cytoplasm. Functionally, together with the chaperonin GroEL, plays an essential role in assisting protein folding. The GroEL-GroES system forms a nano-cage that allows encapsulation of the non-native substrate proteins and provides a physical environment optimized to promote and accelerate protein folding. GroES binds to the apical surface of the GroEL ring, thereby capping the opening of the GroEL channel. The protein is Co-chaperonin GroES of Wolbachia sp. subsp. Brugia malayi (strain TRS).